The primary structure comprises 266 residues: GTP-binding protein Rhes (266 aa).

Residue 26–33 (GASRVGKS) participates in GTP binding. An Effector region motif is present at residues 48-56 (YTPTIEDFH). GTP is bound by residues 73–77 (DTSGN) and 140–143 (NKND). Residues 189–235 (MAKLPHEMSPALHRKISVQYGDAFHPRPFCMRRVKEMDAYGMVSPFA) are interaction with GNB1, GNB2 and GNB3. At Cys-263 the chain carries Cysteine methyl ester. Cys-263 carries the S-farnesyl cysteine lipid modification. Positions 264-266 (TIQ) are cleaved as a propeptide — removed in mature form.

It belongs to the small GTPase superfamily. RasD family. As to quaternary structure, monomer (Potential). Interacts with PIK3CA and UBE2I. Interacts with GNB1, GNB2 and GNB3. Interacts with HTT; interacts with mutant HTT (mHTT) with a much higher affinity than wild type HTT. Farnesylated. Farnesylation is required for membrane targeting. Pancreatic endocrine cells (islets of Langerhans).

It is found in the cell membrane. GTPase signaling protein that binds to and hydrolyzes GTP. Regulates signaling pathways involving G-proteins-coupled receptor and heterotrimeric proteins such as GNB1, GNB2 and GNB3. May be involved in selected striatal competencies, mainly locomotor activity and motor coordination. The polypeptide is GTP-binding protein Rhes (RASD2) (Homo sapiens (Human)).